The following is a 164-amino-acid chain: PTS system sorbose-specific EIIB component (164 aa).

Residues 1-164 (MQITLARIDD…DKINETAFCE (164 aa)) form the PTS EIIB type-4 domain. His14 (pros-phosphohistidine intermediate) is an active-site residue. His14 is subject to Phosphohistidine; by EIIA.

As to quaternary structure, dimer of dimers.

It localises to the cytoplasm. The catalysed reaction is keto-L-sorbose(out) + N(pros)-phospho-L-histidyl-[protein] = L-sorbose 1-phosphate(in) + L-histidyl-[protein]. Functionally, the phosphoenolpyruvate-dependent sugar phosphotransferase system (PTS), a major carbohydrate active transport system, catalyzes the phosphorylation of incoming sugar substrates concomitant with their translocation across the cell membrane. The enzyme II SorABFM PTS system is involved in L-sorbose transport. In Klebsiella pneumoniae, this protein is PTS system sorbose-specific EIIB component.